Consider the following 489-residue polypeptide: Glutamyl-tRNA(Gln) amidotransferase subunit A (489 aa).

Catalysis depends on charge relay system residues Lys-77 and Ser-157. Ser-181 serves as the catalytic Acyl-ester intermediate.

The protein belongs to the amidase family. GatA subfamily. In terms of assembly, heterotrimer of A, B and C subunits.

The catalysed reaction is L-glutamyl-tRNA(Gln) + L-glutamine + ATP + H2O = L-glutaminyl-tRNA(Gln) + L-glutamate + ADP + phosphate + H(+). In terms of biological role, allows the formation of correctly charged Gln-tRNA(Gln) through the transamidation of misacylated Glu-tRNA(Gln) in organisms which lack glutaminyl-tRNA synthetase. The reaction takes place in the presence of glutamine and ATP through an activated gamma-phospho-Glu-tRNA(Gln). The protein is Glutamyl-tRNA(Gln) amidotransferase subunit A of Caulobacter vibrioides (strain ATCC 19089 / CIP 103742 / CB 15) (Caulobacter crescentus).